A 548-amino-acid polypeptide reads, in one-letter code: Glucose-6-phosphate isomerase 1 (548 aa).

The Proton donor role is filled by E353. Residues H384 and K495 contribute to the active site.

Belongs to the GPI family.

It localises to the cytoplasm. It carries out the reaction alpha-D-glucose 6-phosphate = beta-D-fructose 6-phosphate. Its pathway is carbohydrate biosynthesis; gluconeogenesis. It participates in carbohydrate degradation; glycolysis; D-glyceraldehyde 3-phosphate and glycerone phosphate from D-glucose: step 2/4. Its function is as follows. Catalyzes the reversible isomerization of glucose-6-phosphate to fructose-6-phosphate. This Chromohalobacter salexigens (strain ATCC BAA-138 / DSM 3043 / CIP 106854 / NCIMB 13768 / 1H11) protein is Glucose-6-phosphate isomerase 1.